A 211-amino-acid polypeptide reads, in one-letter code: Large ribosomal subunit protein uL4 (211 aa).

The segment at 42 to 87 (AHMRQGTASTLTRSEVRGGGRKPYKQKGTGRARQGSVRTPLRPGGG) is disordered. Residues 60 to 71 (GGRKPYKQKGTG) show a composition bias toward basic residues.

This sequence belongs to the universal ribosomal protein uL4 family. As to quaternary structure, part of the 50S ribosomal subunit.

Its function is as follows. One of the primary rRNA binding proteins, this protein initially binds near the 5'-end of the 23S rRNA. It is important during the early stages of 50S assembly. It makes multiple contacts with different domains of the 23S rRNA in the assembled 50S subunit and ribosome. Functionally, forms part of the polypeptide exit tunnel. The protein is Large ribosomal subunit protein uL4 of Synechococcus sp. (strain CC9902).